We begin with the raw amino-acid sequence, 140 residues long: ATP synthase epsilon chain (140 aa).

This sequence belongs to the ATPase epsilon chain family. F-type ATPases have 2 components, CF(1) - the catalytic core - and CF(0) - the membrane proton channel. CF(1) has five subunits: alpha(3), beta(3), gamma(1), delta(1), epsilon(1). CF(0) has three main subunits: a, b and c.

It is found in the cell inner membrane. In terms of biological role, produces ATP from ADP in the presence of a proton gradient across the membrane. The sequence is that of ATP synthase epsilon chain from Neisseria gonorrhoeae (strain ATCC 700825 / FA 1090).